The following is a 219-amino-acid chain: 7-carboxy-7-deazaguanine synthase (219 aa).

Substrate is bound by residues 12–14 (IQG) and arginine 27. The 202-residue stretch at 18–219 (YTGTPSIFIR…VQIHKYLKIR (202 aa)) folds into the Radical SAM core domain. The [4Fe-4S] cluster site is built by cysteine 31, cysteine 35, and cysteine 38. Residue threonine 40 participates in Mg(2+) binding. Threonine 92 provides a ligand contact to substrate. Residues glycine 94 and 136–138 (SPK) each bind S-adenosyl-L-methionine.

The protein belongs to the radical SAM superfamily. 7-carboxy-7-deazaguanine synthase family. As to quaternary structure, homodimer. [4Fe-4S] cluster is required as a cofactor. S-adenosyl-L-methionine serves as cofactor. It depends on Mg(2+) as a cofactor.

The catalysed reaction is 6-carboxy-5,6,7,8-tetrahydropterin + H(+) = 7-carboxy-7-deazaguanine + NH4(+). Its pathway is purine metabolism; 7-cyano-7-deazaguanine biosynthesis. Functionally, catalyzes the complex heterocyclic radical-mediated conversion of 6-carboxy-5,6,7,8-tetrahydropterin (CPH4) to 7-carboxy-7-deazaguanine (CDG), a step common to the biosynthetic pathways of all 7-deazapurine-containing compounds. The chain is 7-carboxy-7-deazaguanine synthase from Buchnera aphidicola subsp. Schizaphis graminum (strain Sg).